The chain runs to 119 residues: Protein TraH (119 aa).

A disordered region spans residues 1–67; it reads MSNPNEMTDE…ALDESRRPKA (67 aa). Positions 41–54 are enriched in low complexity; sequence APSAPAEPSHSASP.

The initiation process of transfer DNA synthesis requires the interaction of at least three plasmid-specific components (TraH, TraI, and TraJ) at the transfer origin resulting in the assembly of a specialized nucleoprotein complex - the relaxosome. In Escherichia coli, this protein is Protein TraH (traH).